A 327-amino-acid chain; its full sequence is GTPase Obg (327 aa).

In terms of domain architecture, Obg spans 1-159 (MQFIDQANII…WEVQLELKLL (159 aa)). Positions 160-327 (AEVGIIGLPN…SLLFEVWKRI (168 aa)) constitute an OBG-type G domain. Residues 166-173 (GLPNAGKS), 191-195 (FTTLI), 213-216 (DIPG), 280-283 (NKME), and 309-311 (SSS) contribute to the ATP site. Mg(2+) contacts are provided by serine 173 and threonine 193.

The protein belongs to the TRAFAC class OBG-HflX-like GTPase superfamily. OBG GTPase family. In terms of assembly, monomer. Requires Mg(2+) as cofactor.

Its subcellular location is the cytoplasm. Functionally, an essential GTPase which binds GTP, GDP and possibly (p)ppGpp with moderate affinity, with high nucleotide exchange rates and a fairly low GTP hydrolysis rate. Plays a role in control of the cell cycle, stress response, ribosome biogenesis and in those bacteria that undergo differentiation, in morphogenesis control. The chain is GTPase Obg from Prochlorococcus marinus (strain MIT 9312).